A 358-amino-acid polypeptide reads, in one-letter code: Snurportin-1 (358 aa).

An N-acetylmethionine modification is found at Met1. Disordered regions lie at residues 1–26 (MEELSQALASSFSVSQELNSTAAPHP) and 69–90 (DWTGMESGEEENKKDEEEMDID). Positions 1-65 (MEELSQALAS…LDYVNHARRL (65 aa)) are necessary for interaction with KPNB1 and m3G-cap U1 and U5 snRNP import receptor activity. Residues 1-160 (MEELSQALAS…NRFSSLLPGG (160 aa)) form a necessary for interaction with XPO1 region. Over residues 7–22 (ALASSFSVSQELNSTA) the composition is skewed to polar residues. An IBB domain is found at 11–73 (SFSVSQELNS…RLAEDDWTGM (63 aa)). Ser75 is modified (phosphoserine). The interval 128–130 (GKR) is interaction with m3G-cap structure. Residues 210-329 (MHSKLPEEEG…DTKEKLTHKA (120 aa)) are necessary for binding to the m3G-cap structure. Residues 315-341 (KRSQEDTKEKLTHKASENGHYELEHLS) are compositionally biased toward basic and acidic residues. The disordered stretch occupies residues 315–358 (KRSQEDTKEKLTHKASENGHYELEHLSTPKLRNPPHSSESLMDN). Polar residues predominate over residues 349 to 358 (PHSSESLMDN). Phosphoserine is present on Ser351.

This sequence belongs to the snurportin family. Component of an import snRNP complex composed of KPNB1, SNUPN, SMN1 and ZNF259. Component of a nuclear export receptor complex composed of KPNB1, Ran, SNUPN and XPO1. Found in a trimeric export complex with SNUPN, Ran and XPO1. Interacts (via IBB domain) with KPNB1; the interaction is direct. Interacts with DDX20, IPO7, SMN1, SNRPB and XPO1. Interacts directly with XPO1. Its interaction with XPO1 and binding to m3G-cap U snRNPs appears to be mutually exclusive. Can form homomers.

The protein localises to the nucleus. It is found in the cytoplasm. Its function is as follows. Functions as an U snRNP-specific nuclear import adapter. Involved in the trimethylguanosine (m3G)-cap-dependent nuclear import of U snRNPs. Binds specifically to the terminal m3G-cap U snRNAs. This Mus musculus (Mouse) protein is Snurportin-1 (Snupn).